Reading from the N-terminus, the 608-residue chain is Glutamine--fructose-6-phosphate aminotransferase [isomerizing] (608 aa).

The Nucleophile; for GATase activity role is filled by Cys2. The region spanning 2–217 (CGIVGIVGNQ…DGDWAVIGKT (216 aa)) is the Glutamine amidotransferase type-2 domain. SIS domains follow at residues 281-422 (ISDA…ARGT) and 456-598 (LSRE…VDQP). Lys603 functions as the For Fru-6P isomerization activity in the catalytic mechanism.

It is found in the cytoplasm. It catalyses the reaction D-fructose 6-phosphate + L-glutamine = D-glucosamine 6-phosphate + L-glutamate. Involved in the production of the root hair deformation (HAD) factor specifically on medicago. This Rhizobium meliloti (strain 1021) (Ensifer meliloti) protein is Glutamine--fructose-6-phosphate aminotransferase [isomerizing] (nodM).